The chain runs to 388 residues: Basigin (388 aa).

Positions 1–21 (MAAGADVPCAVLALLVLGSLA) are cleaved as a signal peptide. Over 27–323 (TAGFIKSPLS…SGSATVNLRV (297 aa)) the chain is Extracellular. In terms of domain architecture, Ig-like spans 43 to 131 (DSVELHCEAV…NHLSKSPKVK (89 aa)). Disulfide bonds link C49-C113 and C162-C211. One can recognise an Ig-like C2-type domain in the interval 143–218 (ERPVITGQYS…YECIYNTNPV (76 aa)). N-linked (GlcNAc...) asparagine glycans are attached at residues N163, N222, N280, N286, and N307. In terms of domain architecture, Ig-like V-type spans 229 to 323 (PQVVAYKKSE…SGSATVNLRV (95 aa)). C250 and C306 are disulfide-bonded. A helical transmembrane segment spans residues 324–344 (RSRLAALWPFLGIVAEVLVLV). At 345–388 (TIIFIYEKRRKPDEVLDDDDGGSAPLKSNATNHKDKNVRQRNAN) the chain is on the cytoplasmic side. Residues 358–388 (EVLDDDDGGSAPLKSNATNHKDKNVRQRNAN) form a disordered region.

In terms of assembly, interacts with NXNL1, SLC2A1 and SLC16A1. Post-translationally, N-glycosylated. As to expression, retinal cone photoreceptors (at protein level). In terms of tissue distribution, brain endothelial cells, kidney epithelial cells and erythroblasts (at protein level).

It localises to the cell membrane. The protein resides in the photoreceptor inner segment. It is found in the cell projection. Its subcellular location is the cilium. The protein localises to the photoreceptor outer segment. It localises to the endoplasmic reticulum membrane. The protein resides in the basolateral cell membrane. Its function is as follows. Essential for normal retinal maturation and development. Acts as a retinal cell surface receptor for NXNL1 and plays an important role in NXNL1-mediated survival of retinal cone photoreceptors. In association with glucose transporter SLC16A1/GLUT1 and NXNL1, promotes retinal cone survival by enhancing aerobic glycolysis and accelerating the entry of glucose into photoreceptors. Signaling receptor for cyclophilins, essential for PPIA/CYPA and PPIB/CYPB-dependent signaling related to chemotaxis and adhesion of immune cells. Plays an important role in targeting the monocarboxylate transporters SLC16A1/GLUT1, SLC16A3, SLC16A8, SLC16A11 and SLC16A12 to the plasma membrane. Acts as a coreceptor for vascular endothelial growth factor receptor 2 (KDR/VEGFR2) in endothelial cells enhancing its VEGFA-mediated activation and downstream signaling. Promotes angiogenesis through EPAS1/HIF2A-mediated up-regulation of VEGFA and KDR/VEGFR2 in endothelial cells. The protein is Basigin (BSG) of Gallus gallus (Chicken).